A 1332-amino-acid polypeptide reads, in one-letter code: Abscisic-aldehyde oxidase (1332 aa).

Residues 1–88 (MDLEFAVNGE…GCSITTSEGL (88 aa)) form the 2Fe-2S ferredoxin-type domain. [2Fe-2S] cluster-binding residues include cysteine 40, cysteine 45, and cysteine 48. The FAD-binding PCMH-type domain occupies 219–400 (SDHLKYRWTT…LKVEIPSWTA (182 aa)).

The protein belongs to the xanthine dehydrogenase family. In terms of assembly, aldehyde oxidases (AO) are homodimers and heterodimers of AO subunits. AO-delta is a AAO3 homodimer. AAO3 also forms a dimer with AAO2. Interacts with PUB44, and this interaction probably results in targeting of this protein to the proteasome. [2Fe-2S] cluster is required as a cofactor. Requires FAD as cofactor. Mo-molybdopterin serves as cofactor. As to expression, expressed in vascular tissues of all organs, particularly in phloem companion cells and xylem parenchymatic cells. Highly expressed in roots and rosettes, and to lower extent in seedlings, stems and flowers. Expressed at very low levels in siliques and dry seeds. Also detected in root dividing cells (tips and primordia), in mesophyll cells and inside the guard cells.

The protein localises to the cytoplasm. The enzyme catalyses 2-cis-(+)-abscisic aldehyde + O2 + H2O = 2-cis-(+)-abscisate + H2O2 + H(+). The catalysed reaction is 1-naphthaldehyde + O2 + H2O = 1-naphthoate + H2O2 + H(+). It catalyses the reaction indole-3-acetaldehyde + O2 + H2O = (indol-3-yl)acetate + H2O2 + H(+). Its function is as follows. In higher plants aldehyde oxidases (AO) appear to be homo- and heterodimeric assemblies of AO subunits with probably different physiological functions. AO-delta may be involved in the last step of abscisic acid biosynthesis, at least in leaves and seeds. In vitro, AO-delta oxidizes abscisic aldehyde to abscisic acid (ABA). In vitro, AO-delta also uses 1-naphthaldehyde, indole-3-aldehyde (IAld), benzaldehyde and cinnamaldehyde as substrate; the AAO2-AAO3 dimer also uses abscisic aldehyde as substrate. The chain is Abscisic-aldehyde oxidase (AAO3) from Arabidopsis thaliana (Mouse-ear cress).